A 516-amino-acid chain; its full sequence is Facilitated glucose transporter homolog (516 aa).

The tract at residues 1-37 (MNAVVASQNKNDRSFSNMESESSSNVEKSEKENHHQS) is disordered. The Cytoplasmic segment spans residues 1–47 (MNAVVASQNKNDRSFSNMESESSSNVEKSEKENHHQSLPDENWTPFL). A compositionally biased stretch (low complexity) spans 14–26 (SFSNMESESSSNV). Residues 27-37 (EKSEKENHHQS) are compositionally biased toward basic and acidic residues. Residues 48-68 (FFCISSIALASFQDGFQIGCI) traverse the membrane as a helical segment. Residues 69-101 (NAPGPLIIDWIKKCHFELFGEVLSQYQADFIWS) are Extracellular-facing. Residues 102–122 (VAVSMFSVGGMFGSFCSGFLA) form a helical membrane-spanning segment. Topologically, residues 123 to 138 (DKFGRKSTLLYNNILA) are cytoplasmic. Residues 139–159 (LLAAVCLSTSKLFNFYPMIVF) traverse the membrane as a helical segment. At 160–161 (GR) the chain is on the extracellular side. Residues 162–182 (FLVGLNCGITSGLVPMFLTEL) traverse the membrane as a helical segment. The Cytoplasmic portion of the chain corresponds to 183-200 (APANLRGKCGSFHQLNIS). Residues 201–221 (VAIVLSQALGLPQIFGTQVGW) traverse the membrane as a helical segment. P222 is a topological domain (extracellular). Residues 223–243 (YIFACVAIPTFLQLATIPFCV) traverse the membrane as a helical segment. At 244–306 (ESPKYLISKL…SLFKGDNQWP (63 aa)) the chain is on the cytoplasmic side. A helical transmembrane segment spans residues 307-327 (MIVSILMMFSQQFSGISAVTF). Residues 328–344 (YSTLIFKRNGLSGNEPM) are Extracellular-facing. A helical transmembrane segment spans residues 345-365 (YATVGFGCIKLIATFGCLFLI). Topologically, residues 366-376 (DHPKFGRKRLH) are cytoplasmic. Residues 377 to 397 (IAGLSGMCISSILIVITLTLS) form a helical membrane-spanning segment. At 398–409 (NAGYHWASYMNV) the chain is on the extracellular side. The chain crosses the membrane as a helical span at residues 410–430 (LFILSFVVTFAFGPGPIPWFF). Residues 431-444 (TSELFDSATRGRAA) lie on the Cytoplasmic side of the membrane. The helical transmembrane segment at 445–465 (AVSATSNWVANWMVGLTFLPI) threads the bilayer. At 466-471 (NNIIHQ) the chain is on the extracellular side. Residues 472–492 (YAFLMFTFFTFTFAIFTWKFV) traverse the membrane as a helical segment. The Cytoplasmic portion of the chain corresponds to 493–516 (PETKGKSPSAIRKELAFMRKRICS).

Belongs to the major facilitator superfamily. Sugar transporter (TC 2.A.1.1) family. In terms of tissue distribution, expressed in seam cells from the early embryonic stage through the L2 stage (at protein level).

The protein localises to the cell membrane. In terms of biological role, appears to have no transport activity for glucose. The chain is Facilitated glucose transporter homolog from Caenorhabditis elegans.